The following is a 207-amino-acid chain: ATP synthase subunit b (207 aa).

Residues 1–27 (MKLRATFVFKTTLVALSFALFALFLVS) form the signal peptide. Residue Cys28 is the site of N-palmitoyl cysteine attachment. Cys28 carries S-diacylglycerol cysteine lipidation. Residues 49 to 69 (WVFLAHLLAFVILLFLLLFLF) traverse the membrane as a helical segment.

Belongs to the ATPase B chain family. As to quaternary structure, F-type ATPases have 2 components, F(1) - the catalytic core - and F(0) - the membrane proton channel. F(1) has five subunits: alpha(3), beta(3), gamma(1), delta(1), epsilon(1). F(0) has three main subunits: a(1), b(2) and c(10-14). The alpha and beta chains form an alternating ring which encloses part of the gamma chain. F(1) is attached to F(0) by a central stalk formed by the gamma and epsilon chains, while a peripheral stalk is formed by the delta and b chains.

It localises to the cell membrane. Functionally, f(1)F(0) ATP synthase produces ATP from ADP in the presence of a proton or sodium gradient. F-type ATPases consist of two structural domains, F(1) containing the extramembraneous catalytic core and F(0) containing the membrane proton channel, linked together by a central stalk and a peripheral stalk. During catalysis, ATP synthesis in the catalytic domain of F(1) is coupled via a rotary mechanism of the central stalk subunits to proton translocation. Component of the F(0) channel, it forms part of the peripheral stalk, linking F(1) to F(0). The chain is ATP synthase subunit b from Mycoplasma pneumoniae (strain ATCC 29342 / M129 / Subtype 1) (Mycoplasmoides pneumoniae).